The primary structure comprises 717 residues: Glutamate--cysteine ligase (717 aa).

Positions 484–576 (SKTTEQRAAK…TDSDHTDTDD (93 aa)) are disordered. Composition is skewed to low complexity over residues 492 to 518 (AKAQ…NGNG) and 551 to 567 (GTTN…SNGT).

It belongs to the glutamate--cysteine ligase type 3 family.

It catalyses the reaction L-cysteine + L-glutamate + ATP = gamma-L-glutamyl-L-cysteine + ADP + phosphate + H(+). It carries out the reaction (2S)-2-aminobutanoate + L-glutamate + ATP = gamma-L-glutamyl-(2S)-2-aminobutanoate + ADP + phosphate + H(+). The protein operates within sulfur metabolism; glutathione biosynthesis; glutathione from L-cysteine and L-glutamate: step 1/2. Its function is as follows. Catalyzes the ATP-dependent ligation of L-glutamate and L-cysteine and participates in the first and rate-limiting step in glutathione biosynthesis. The sequence is that of Glutamate--cysteine ligase from Drosophila melanogaster (Fruit fly).